We begin with the raw amino-acid sequence, 549 residues long: MAVDSPLQSRMVSATTSEKDVKALKFIEEMTRNPDSVQEKVLGEILTRNSNTEYLKRFDLDGVVDRKTFKSKVPVVTYEDLKPEIQRISNGDCSPILSSHPITEFLTSSGTSAGERKLMPTIEEDLDRRQLLYSLLMPVMNLYVPGLDKGKGLYFLFVKSESKTSGGLPARPVLTSYYKSDHFKRRPYDPYNVYTSPNEAILCSDSSQSMYAQMLCGLLMRHEVLRLGAVFASGLLRAISFLQNNWKELARDISTGTLSSRIFDPAIKNRMSKILTKPDQELAEFLVGVCSQENWEGIITKIWPNTKYLDVIVTGAMAQYIPTLEYYSGGLPMACTMYASSESYFGINLKPMCKPSEVSYTIMPNMAYFEFLPHNHDGDGAAEASLDETSLVELANVEVGKEYELVITTYAGLYRYRVGDILRVTGFHNSAPQFKFIRRKNVLLSVESDKTDEAELQKAVENASRLFAEQGTRVIEYTSYAETKTIPGHYVIYWELLGRDQSNALMSEEVMAKCCLEMEESLNSVYRQSRVADKSIGPLGDTCGTERYV.

It belongs to the IAA-amido conjugating enzyme family. As to expression, expressed in flowers, pollen, cotyledons, stipules, true leaves, hypocotyls, and all parts of the roots except for the primary root tips.

In terms of biological role, catalyzes the synthesis of indole-3-acetic acid (IAA)-amino acid conjugates, providing a mechanism for the plant to cope with the presence of excess auxin. Strongly reactive with Glu, Gln, Trp, Asp, Ala, Leu, Phe, Gly, Tyr, Met, Ile and Val. Little or no product formation with His, Ser, Thr, Arg, Lys, or Cys. Also active on pyruvic and butyric acid analogs of IAA, PAA and the synthetic auxin naphthaleneacetic acid (NAA). The two chlorinated synthetic auxin herbicides 2,4-D and 3,6-dichloro-o-anisic acid (dicamba) cannot be used as substrates. This Arabidopsis thaliana (Mouse-ear cress) protein is Indole-3-acetic acid-amido synthetase GH3.2 (GH3.2).